The primary structure comprises 236 residues: MRLHHLHVAYLDHKASSSSSSPAPPSISPSSIPGSAAFPAFSFKCLRPLAPKISLPEPRKMIAPPDFVVPRARNASKLLNYTVQVPAAGTTRWNPSAEQIKVLEMLYRGGMRTPNSVQIERITEELGKYGRIEGKNVFYWFQNHKARERQKQKRAALLTLSTLDPSLLPATANETKEAPEKKEKDVEDGLASCKRRCKAWGDGAGDGDAVVATEAAGGCTDEVTLELFPLHPQGKA.

Positions 88-152 (AGTTRWNPSA…NHKARERQKQ (65 aa)) form a DNA-binding region, homeobox; WUS-type. Residues 169-188 (PATANETKEAPEKKEKDVED) form a disordered region. The segment covering 174 to 187 (ETKEAPEKKEKDVE) has biased composition (basic and acidic residues).

The protein belongs to the WUS homeobox family.

It localises to the nucleus. Its function is as follows. Transcription factor which may be involved in developmental processes. This Oryza sativa subsp. indica (Rice) protein is WUSCHEL-related homeobox 4 (WOX4).